The following is a 162-amino-acid chain: MASPRTVTIVALSVTLGLFFVFMGTIKLTPRLSKDAYSEMKRAYKSYVKALPALKKIGISSVFLRKAIGSLELACGIVLTLVPGRPKDVANFILLLLVLIVLFFHQLVGDPLKRYAHALVFGILLTCRLLVSRQPEEEFPEKKLSRGNNGAHSREPIKMKVS.

Topologically, residues 1–5 (MASPR) are cytoplasmic. A helical membrane pass occupies residues 6-26 (TVTIVALSVTLGLFFVFMGTI). The Lumenal portion of the chain corresponds to 27-61 (KLTPRLSKDAYSEMKRAYKSYVKALPALKKIGISS). Residues 62 to 82 (VFLRKAIGSLELACGIVLTLV) traverse the membrane as a helical segment. The Cytoplasmic portion of the chain corresponds to 83–88 (PGRPKD). Residues 89 to 109 (VANFILLLLVLIVLFFHQLVG) traverse the membrane as a helical segment. At 110–114 (DPLKR) the chain is on the lumenal side. Residues 115–131 (YAHALVFGILLTCRLLV) traverse the membrane as a helical segment. Over 132-162 (SRQPEEEFPEKKLSRGNNGAHSREPIKMKVS) the chain is Cytoplasmic. Residues 141 to 162 (EKKLSRGNNGAHSREPIKMKVS) form a disordered region. Basic and acidic residues predominate over residues 152 to 162 (HSREPIKMKVS).

It belongs to the DoxX family.

It localises to the peroxisome membrane. Its subcellular location is the cytoplasmic vesicle. The protein resides in the endoplasmic reticulum membrane. In terms of biological role, molecular chaperone which mediates the proper assembly and functional expression of the nicotinic acetylcholine receptors (nAChRs) throughout the brain. Essential for the proper folding, assembly, function and surface trafficking of alpha-7 (CHRNA7), alpha-4-beta-2, alpha-3-beta-2 and alpha-3-beta-4 receptors. The polypeptide is Novel acetylcholine receptor chaperone (tmem35a) (Xenopus tropicalis (Western clawed frog)).